We begin with the raw amino-acid sequence, 111 residues long: Large ribosomal subunit protein uL22 (111 aa).

The protein belongs to the universal ribosomal protein uL22 family. In terms of assembly, part of the 50S ribosomal subunit.

Its function is as follows. This protein binds specifically to 23S rRNA; its binding is stimulated by other ribosomal proteins, e.g. L4, L17, and L20. It is important during the early stages of 50S assembly. It makes multiple contacts with different domains of the 23S rRNA in the assembled 50S subunit and ribosome. The globular domain of the protein is located near the polypeptide exit tunnel on the outside of the subunit, while an extended beta-hairpin is found that lines the wall of the exit tunnel in the center of the 70S ribosome. The sequence is that of Large ribosomal subunit protein uL22 from Thermoanaerobacter pseudethanolicus (strain ATCC 33223 / 39E) (Clostridium thermohydrosulfuricum).